The chain runs to 302 residues: Homoserine O-acetyltransferase 1 (302 aa).

Catalysis depends on Cys142, which acts as the Acyl-thioester intermediate. Positions 163 and 192 each coordinate substrate. His235 serves as the catalytic Proton acceptor. Glu237 is a catalytic residue. Arg249 provides a ligand contact to substrate.

It belongs to the MetA family.

It is found in the cytoplasm. The enzyme catalyses L-homoserine + acetyl-CoA = O-acetyl-L-homoserine + CoA. It participates in amino-acid biosynthesis; L-methionine biosynthesis via de novo pathway; O-acetyl-L-homoserine from L-homoserine: step 1/1. In terms of biological role, transfers an acetyl group from acetyl-CoA to L-homoserine, forming acetyl-L-homoserine. The chain is Homoserine O-acetyltransferase 1 from Ilyobacter polytropus (strain ATCC 51220 / DSM 2926 / LMG 16218 / CuHBu1).